A 292-amino-acid polypeptide reads, in one-letter code: Cbb3-type cytochrome c oxidase subunit CcoP (292 aa).

Helical transmembrane passes span 11-31 and 62-82; these read FGLIAALVILVLTIYESSSLI and VGWIASFMCTIVWAFWYFFFG. Cytochrome c domains follow at residues 116–195 and 205–288; these read ELVD…MAEI and QLID…QSLK. Residues cysteine 129, cysteine 132, histidine 133, methionine 174, cysteine 219, cysteine 222, histidine 223, and methionine 264 each contribute to the heme c site.

Belongs to the CcoP / FixP family. Component of the cbb3-type cytochrome c oxidase at least composed of CcoN, CcoO, CcoQ and CcoP. Requires heme c as cofactor.

Its subcellular location is the cell inner membrane. It participates in energy metabolism; oxidative phosphorylation. Its function is as follows. C-type cytochrome. Part of the cbb3-type cytochrome c oxidase complex. CcoP subunit is required for transferring electrons from donor cytochrome c via its heme groups to CcoO subunit. From there, electrons are shuttled to the catalytic binuclear center of CcoN subunit where oxygen reduction takes place. The complex also functions as a proton pump. This Helicobacter pylori (strain 52) protein is Cbb3-type cytochrome c oxidase subunit CcoP.